The primary structure comprises 143 residues: Heat shock protein Hsp-16.48/Hsp-16.49 (143 aa).

The sHSP domain occupies 35 to 140 (HNSFNFSDNI…SSRSIPINFV (106 aa)).

Belongs to the small heat shock protein (HSP20) family.

The protein is Heat shock protein Hsp-16.48/Hsp-16.49 (hsp-16.48) of Caenorhabditis elegans.